Consider the following 203-residue polypeptide: Ribosomal RNA large subunit methyltransferase E (203 aa).

S-adenosyl-L-methionine-binding residues include Gly-60, Trp-62, Asp-79, Asp-95, and Asp-119. The active-site Proton acceptor is Lys-159.

The protein belongs to the class I-like SAM-binding methyltransferase superfamily. RNA methyltransferase RlmE family.

The protein resides in the cytoplasm. The catalysed reaction is uridine(2552) in 23S rRNA + S-adenosyl-L-methionine = 2'-O-methyluridine(2552) in 23S rRNA + S-adenosyl-L-homocysteine + H(+). Specifically methylates the uridine in position 2552 of 23S rRNA at the 2'-O position of the ribose in the fully assembled 50S ribosomal subunit. The protein is Ribosomal RNA large subunit methyltransferase E of Pelagibacter ubique (strain HTCC1062).